We begin with the raw amino-acid sequence, 146 residues long: Hemoglobin subunit beta (146 aa).

The residue at position 1 (valine 1) is an N-acetylvaline. A Globin domain is found at 2–146 (ELTAEEKAAV…VANALAHKYH (145 aa)). A Phosphoserine modification is found at serine 44. N6-acetyllysine is present on lysine 59. Histidine 63 serves as a coordination point for heme b. N6-acetyllysine is present on lysine 82. Residue histidine 92 coordinates heme b. Cysteine 93 bears the S-nitrosocysteine mark. At lysine 144 the chain carries N6-acetyllysine.

This sequence belongs to the globin family. Heterotetramer of two alpha chains and two beta chains. Red blood cells.

Involved in oxygen transport from the lung to the various peripheral tissues. This Ceratotherium simum (White rhinoceros) protein is Hemoglobin subunit beta (HBB).